The following is a 255-amino-acid chain: Indole-3-glycerol phosphate synthase (255 aa).

The protein belongs to the TrpC family.

It carries out the reaction 1-(2-carboxyphenylamino)-1-deoxy-D-ribulose 5-phosphate + H(+) = (1S,2R)-1-C-(indol-3-yl)glycerol 3-phosphate + CO2 + H2O. It functions in the pathway amino-acid biosynthesis; L-tryptophan biosynthesis; L-tryptophan from chorismate: step 4/5. The polypeptide is Indole-3-glycerol phosphate synthase (Streptococcus thermophilus (strain ATCC BAA-491 / LMD-9)).